A 249-amino-acid polypeptide reads, in one-letter code: 2,5-diamino-6-ribosylamino-4(3H)-pyrimidinone 5'-phosphate reductase (249 aa).

Residues T79, D83, M164, and 187–191 (GGIVI) each bind NADP(+).

Belongs to the HTP reductase family. As to quaternary structure, homodimer.

The catalysed reaction is 2,5-diamino-6-(1-D-ribitylamino)pyrimidin-4(3H)-one 5'-phosphate + NADP(+) = 2,5-diamino-6-(1-D-ribosylamino)pyrimidin-4(3H)-one 5'-phosphate + NADPH + H(+). The enzyme catalyses 2,5-diamino-6-(1-D-ribitylamino)pyrimidin-4(3H)-one 5'-phosphate + NAD(+) = 2,5-diamino-6-(1-D-ribosylamino)pyrimidin-4(3H)-one 5'-phosphate + NADH + H(+). The protein operates within cofactor biosynthesis; riboflavin biosynthesis. In terms of biological role, catalyzes an early step in riboflavin biosynthesis, the NADPH-dependent reduction of the ribose side chain of 2,5-diamino-6-ribosylamino-4(3H)-pyrimidinone 5'-phosphate, yielding 2,5-diamino-6-ribitylamino-4(3H)-pyrimidinone 5'-phosphate. The polypeptide is 2,5-diamino-6-ribosylamino-4(3H)-pyrimidinone 5'-phosphate reductase (RIB7) (Kluyveromyces marxianus (Yeast)).